The following is a 312-amino-acid chain: Apolipoprotein E (312 aa).

Positions 1–18 (MKALWAVLLVTLLAGCLA) are cleaved as a signal peptide. 8 tandem repeats follow at residues 72–93 (VLMEDTMTEVKAYKKELEEQLG), 94–115 (PVAEETRARLAKEVQAAQARLG), 116–137 (ADMEDLRNRLGQYRNEVHTMLG), 138–159 (QSTEEIRARLSTHLRKMRKRLM), 160–181 (RDAEDLQKRLAVYKAGAREGAE), 182–203 (RGVSALRERLGPLVEQGRQRTA), 204–225 (NLGAGAAQPLRDRAQAFGDRIR), and 226–247 (GRLEEVGNQARDRLEEVREHME). The 8 X 22 AA approximate tandem repeats stretch occupies residues 72–247 (VLMEDTMTEV…RLEEVREHME (176 aa)). The residue at position 135 (Met-135) is a Methionine sulfoxide. Ser-139 carries the post-translational modification Phosphoserine. An LDL and other lipoprotein receptors binding region spans residues 150 to 160 (HLRKMRKRLMR). A heparin-binding site is contributed by 154–157 (MRKR). The lipid-binding and lipoprotein association stretch occupies residues 202-282 (TANLGAGAAQ…GWFEPIVEDM (81 aa)). 221–228 (GDRIRGRL) lines the heparin pocket. The homooligomerization stretch occupies residues 258–312 (QQIRLQAEIFQARLKGWFEPIVEDMHRQWANLMEKIQASVATNPIISTPMPQENQ). The tract at residues 270–282 (RLKGWFEPIVEDM) is specificity for association with VLDL.

It belongs to the apolipoprotein A1/A4/E family. In terms of assembly, homotetramer. May interact with ABCA1; functionally associated with ABCA1 in the biogenesis of HDLs. May interact with APP/A4 amyloid-beta peptide; the interaction is extremely stable in vitro but its physiological significance is unclear. May interact with MAPT. May interact with MAP2. In the cerebrospinal fluid, interacts with secreted SORL1. Interacts with PMEL; this allows the loading of PMEL luminal fragment on ILVs to induce fibril nucleation. Post-translationally, APOE exists as multiple glycosylated and sialylated glycoforms within cells and in plasma. The extent of glycosylation and sialylation are tissue and context specific. In terms of processing, glycated in plasma VLDL. Phosphorylated by FAM20C in the extracellular medium.

Its subcellular location is the secreted. The protein localises to the extracellular space. It is found in the extracellular matrix. The protein resides in the extracellular vesicle. It localises to the endosome. Its subcellular location is the multivesicular body. Functionally, APOE is an apolipoprotein, a protein associating with lipid particles, that mainly functions in lipoprotein-mediated lipid transport between organs via the plasma and interstitial fluids. APOE is a core component of plasma lipoproteins and is involved in their production, conversion and clearance. Apolipoproteins are amphipathic molecules that interact both with lipids of the lipoprotein particle core and the aqueous environment of the plasma. As such, APOE associates with chylomicrons, chylomicron remnants, very low density lipoproteins (VLDL) and intermediate density lipoproteins (IDL) but shows a preferential binding to high-density lipoproteins (HDL). It also binds a wide range of cellular receptors including the LDL receptor/LDLR, the LDL receptor-related proteins LRP1, LRP2 and LRP8 and the very low-density lipoprotein receptor/VLDLR that mediate the cellular uptake of the APOE-containing lipoprotein particles. Finally, APOE also has a heparin-binding activity and binds heparan-sulfate proteoglycans on the surface of cells, a property that supports the capture and the receptor-mediated uptake of APOE-containing lipoproteins by cells. A main function of APOE is to mediate lipoprotein clearance through the uptake of chylomicrons, VLDLs, and HDLs by hepatocytes. APOE is also involved in the biosynthesis by the liver of VLDLs as well as their uptake by peripheral tissues ensuring the delivery of triglycerides and energy storage in muscle, heart and adipose tissues. By participating in the lipoprotein-mediated distribution of lipids among tissues, APOE plays a critical role in plasma and tissues lipid homeostasis. APOE is also involved in two steps of reverse cholesterol transport, the HDLs-mediated transport of cholesterol from peripheral tissues to the liver, and thereby plays an important role in cholesterol homeostasis. First, it is functionally associated with ABCA1 in the biogenesis of HDLs in tissues. Second, it is enriched in circulating HDLs and mediates their uptake by hepatocytes. APOE also plays an important role in lipid transport in the central nervous system, regulating neuron survival and sprouting. This is Apolipoprotein E (Apoe) from Mus pahari (Gairdner's shrew-mouse).